Reading from the N-terminus, the 314-residue chain is Protoheme IX farnesyltransferase (314 aa).

The next 8 helical transmembrane spans lie at 31–51 (VMSL…GHFH), 52–72 (PVLA…SGAL), 119–139 (ILVN…YVVI), 152–172 (IVIG…AVTG), 179–199 (LLLF…LALF), 225–245 (ILLY…LGYF), 247–267 (AVYG…AINV), and 284–304 (FAFS…EVVF).

The protein belongs to the UbiA prenyltransferase family. Protoheme IX farnesyltransferase subfamily.

The protein resides in the cell inner membrane. It carries out the reaction heme b + (2E,6E)-farnesyl diphosphate + H2O = Fe(II)-heme o + diphosphate. It participates in porphyrin-containing compound metabolism; heme O biosynthesis; heme O from protoheme: step 1/1. Functionally, converts heme B (protoheme IX) to heme O by substitution of the vinyl group on carbon 2 of heme B porphyrin ring with a hydroxyethyl farnesyl side group. The protein is Protoheme IX farnesyltransferase of Bradyrhizobium diazoefficiens (strain JCM 10833 / BCRC 13528 / IAM 13628 / NBRC 14792 / USDA 110).